A 150-amino-acid chain; its full sequence is Viral late gene transcription factor 2 (150 aa).

The protein belongs to the orthopoxvirus VLTF-2/OPG126 family. As to quaternary structure, interacts with the late transcription elongation factor VLTF-4/OPG110. Interacts with the late transcription factors VLTF-1/OPG093.

Acts with RNA polymerase to initiate transcription from late gene promoters. The sequence is that of Viral late gene transcription factor 2 (OPG126) from Monkeypox virus.